Reading from the N-terminus, the 382-residue chain is Dual-specificity RNA methyltransferase RlmN (382 aa).

Glu95 acts as the Proton acceptor in catalysis. The region spanning 101–348 (EDDRGTLCIS…TTVRKTRGDD (248 aa)) is the Radical SAM core domain. Cys108 and Cys353 are joined by a disulfide. Positions 115, 119, and 122 each coordinate [4Fe-4S] cluster. S-adenosyl-L-methionine-binding positions include 179-180 (GE), Ser211, 233-235 (SLH), and Asn310. The S-methylcysteine intermediate role is filled by Cys353.

The protein belongs to the radical SAM superfamily. RlmN family. [4Fe-4S] cluster serves as cofactor.

The protein localises to the cytoplasm. It carries out the reaction adenosine(2503) in 23S rRNA + 2 reduced [2Fe-2S]-[ferredoxin] + 2 S-adenosyl-L-methionine = 2-methyladenosine(2503) in 23S rRNA + 5'-deoxyadenosine + L-methionine + 2 oxidized [2Fe-2S]-[ferredoxin] + S-adenosyl-L-homocysteine. The enzyme catalyses adenosine(37) in tRNA + 2 reduced [2Fe-2S]-[ferredoxin] + 2 S-adenosyl-L-methionine = 2-methyladenosine(37) in tRNA + 5'-deoxyadenosine + L-methionine + 2 oxidized [2Fe-2S]-[ferredoxin] + S-adenosyl-L-homocysteine. In terms of biological role, specifically methylates position 2 of adenine 2503 in 23S rRNA and position 2 of adenine 37 in tRNAs. m2A2503 modification seems to play a crucial role in the proofreading step occurring at the peptidyl transferase center and thus would serve to optimize ribosomal fidelity. In Bordetella pertussis (strain Tohama I / ATCC BAA-589 / NCTC 13251), this protein is Dual-specificity RNA methyltransferase RlmN.